The sequence spans 88 residues: Small ribosomal subunit protein bS20 (88 aa).

Residues 1 to 28 are disordered; that stretch reads MANIKSQIKRNKTNEKARLRNKAVKSSL.

It belongs to the bacterial ribosomal protein bS20 family.

Its function is as follows. Binds directly to 16S ribosomal RNA. This chain is Small ribosomal subunit protein bS20, found in Streptomyces avermitilis (strain ATCC 31267 / DSM 46492 / JCM 5070 / NBRC 14893 / NCIMB 12804 / NRRL 8165 / MA-4680).